The chain runs to 412 residues: Inactive serine protease 35 (412 aa).

The N-terminal stretch at 1–23 is a signal peptide; that stretch reads MGAMFFGLMLFTLGWTLIDGSES. N-linked (GlcNAc...) asparagine glycosylation occurs at N110. The Peptidase S1 domain occupies 124-407; sequence VYGTDSRFSI…ICLWMHGDDA (284 aa). The cysteines at positions 154 and 170 are disulfide-linked. Basic residues predominate over residues 192–207; it reads RNKGGGKRRRGSRRNR. The disordered stretch occupies residues 192-246; that stretch reads RNKGGGKRRRGSRRNRREVSGAGREGSQDSLKETAKAGRRRKGSARRQRAADGRP. A compositionally biased stretch (basic and acidic residues) spans 217–227; sequence GSQDSLKETAK. A compositionally biased stretch (basic residues) spans 228–239; the sequence is AGRRRKGSARRQ.

The protein belongs to the peptidase S1 family.

It is found in the secreted. This is Inactive serine protease 35 (PRSS35) from Bos taurus (Bovine).